The sequence spans 92 residues: Small ribosomal subunit protein uS19c (92 aa).

Belongs to the universal ribosomal protein uS19 family.

The protein resides in the plastid. It localises to the chloroplast. Functionally, protein S19 forms a complex with S13 that binds strongly to the 16S ribosomal RNA. This is Small ribosomal subunit protein uS19c from Piper cenocladum (Ant piper).